The sequence spans 557 residues: Dihydroxy-acid dehydratase (557 aa).

Residue Cys-50 coordinates [2Fe-2S] cluster. Asp-82 lines the Mg(2+) pocket. Residue Cys-123 coordinates [2Fe-2S] cluster. The Mg(2+) site is built by Asp-124 and Lys-125. At Lys-125 the chain carries N6-carboxylysine. Residue Cys-195 coordinates [2Fe-2S] cluster. Glu-447 serves as a coordination point for Mg(2+). The active-site Proton acceptor is the Ser-473.

It belongs to the IlvD/Edd family. Homodimer. The cofactor is [2Fe-2S] cluster. Mg(2+) serves as cofactor.

It catalyses the reaction (2R)-2,3-dihydroxy-3-methylbutanoate = 3-methyl-2-oxobutanoate + H2O. The enzyme catalyses (2R,3R)-2,3-dihydroxy-3-methylpentanoate = (S)-3-methyl-2-oxopentanoate + H2O. The protein operates within amino-acid biosynthesis; L-isoleucine biosynthesis; L-isoleucine from 2-oxobutanoate: step 3/4. It functions in the pathway amino-acid biosynthesis; L-valine biosynthesis; L-valine from pyruvate: step 3/4. In terms of biological role, functions in the biosynthesis of branched-chain amino acids. Catalyzes the dehydration of (2R,3R)-2,3-dihydroxy-3-methylpentanoate (2,3-dihydroxy-3-methylvalerate) into 2-oxo-3-methylpentanoate (2-oxo-3-methylvalerate) and of (2R)-2,3-dihydroxy-3-methylbutanoate (2,3-dihydroxyisovalerate) into 2-oxo-3-methylbutanoate (2-oxoisovalerate), the penultimate precursor to L-isoleucine and L-valine, respectively. The chain is Dihydroxy-acid dehydratase from Ralstonia nicotianae (strain ATCC BAA-1114 / GMI1000) (Ralstonia solanacearum).